Reading from the N-terminus, the 83-residue chain is Carboxysome shell vertex protein CsoS4A (83 aa).

One can recognise a BMV domain in the interval 1-78; sequence MKIMQVEKTL…SDLTIIGIID (78 aa).

It belongs to the CcmL/EutN family. CsoS4 subfamily. In terms of assembly, homopentamer.

Its subcellular location is the carboxysome. Functionally, probably forms vertices in the carboxysome, a polyhedral inclusion where RuBisCO (ribulose bisphosphate carboxylase, cbbL-cbbS) is sequestered. Has been modeled to induce curvature upon insertion into an otherwise flat hexagonal layer of major carboxysome subunits. A minor shell protein, only 12 pentamers of CsoS4A/CsoS4B are calculated to be present in each carboxysome. The 2 CsoS4 proteins contribute to the impermeability of the carboxysome to CO(2). In terms of biological role, unlike beta-carboxysomes, alpha-carboxysomes (Cb) can form without cargo protein. CsoS2 is essential for Cb formation and is also capable of targeting foreign proteins to the Cb. The Cb shell assembles with the aid of CsoS2; CsoS1A, CsoS1B and CsoS1C form the majority of the shell while CsoS4A and CsoS4B form vertices. CsoS1D forms pseudohexamers that probably control metabolite flux into and out of the shell. The sequence is that of Carboxysome shell vertex protein CsoS4A from Halothiobacillus neapolitanus (strain ATCC 23641 / c2) (Thiobacillus neapolitanus).